A 420-amino-acid chain; its full sequence is ATP-dependent Clp protease ATP-binding subunit ClpX (420 aa).

Residues 4–57 (KTPGNNGKQKLFCSFCGKEQDAVKRLVAGPGVYICDECISLCNEIIAEDHEHSH) form the ClpX-type ZB domain. Positions 16, 19, 38, and 41 each coordinate Zn(2+). 122–129 (PTGSGKTL) provides a ligand contact to ATP.

The protein belongs to the ClpX chaperone family. Component of the ClpX-ClpP complex. Forms a hexameric ring that, in the presence of ATP, binds to fourteen ClpP subunits assembled into a disk-like structure with a central cavity, resembling the structure of eukaryotic proteasomes.

In terms of biological role, ATP-dependent specificity component of the Clp protease. It directs the protease to specific substrates. Can perform chaperone functions in the absence of ClpP. This Leptospira interrogans serogroup Icterohaemorrhagiae serovar copenhageni (strain Fiocruz L1-130) protein is ATP-dependent Clp protease ATP-binding subunit ClpX.